We begin with the raw amino-acid sequence, 186 residues long: Elongation factor P (186 aa).

Belongs to the elongation factor P family.

It is found in the cytoplasm. Its pathway is protein biosynthesis; polypeptide chain elongation. Involved in peptide bond synthesis. Stimulates efficient translation and peptide-bond synthesis on native or reconstituted 70S ribosomes in vitro. Probably functions indirectly by altering the affinity of the ribosome for aminoacyl-tRNA, thus increasing their reactivity as acceptors for peptidyl transferase. This Streptococcus thermophilus (strain CNRZ 1066) protein is Elongation factor P.